Reading from the N-terminus, the 206-residue chain is MEPLPASFFNRPTVSVARDLLGARLVHEAPTGTRLVGRIVETEAYTEDDPACHASHLSRDPETGEVVGQGRGQDLFAAPGTAYVYLIYGVHWLLNVVTEPEGTAGAVLVRAVEPEEGLQDMRTERGVDRRVDLTNGPGKLAEAFGIDGEFHQTRLTARPLFFADGDSVDDEQVARSSRIGISKGVERSWRWYVAANRFVSPASPSG.

This sequence belongs to the DNA glycosylase MPG family.

The chain is Putative 3-methyladenine DNA glycosylase from Salinibacter ruber (strain DSM 13855 / M31).